A 287-amino-acid chain; its full sequence is Phycobilisome 32.1 kDa linker polypeptide, phycocyanin-associated, rod (287 aa).

The region spanning 2–180 (AITAAASRLG…LYRGYANSDR (179 aa)) is the PBS-linker domain. In terms of domain architecture, CpcD-like spans 235-287 (GRVYRIEVAGIRQPGYPGVRRSSTAFLVPYEQLSAKMQQLQRTGARIISVNPA).

This sequence belongs to the phycobilisome linker protein family.

The protein localises to the cellular thylakoid membrane. Rod linker protein, associated with phycocyanin. Linker polypeptides determine the state of aggregation and the location of the disk-shaped phycobiliprotein units within the phycobilisome and modulate their spectroscopic properties in order to mediate a directed and optimal energy transfer. This Thermosynechococcus vestitus (strain NIES-2133 / IAM M-273 / BP-1) protein is Phycobilisome 32.1 kDa linker polypeptide, phycocyanin-associated, rod (cpcC).